We begin with the raw amino-acid sequence, 183 residues long: Large ribosomal subunit protein uL18 (183 aa).

This sequence belongs to the universal ribosomal protein uL18 family. Part of the 50S ribosomal subunit. Contacts the 5S and 23S rRNAs.

In terms of biological role, this is one of the proteins that bind and probably mediate the attachment of the 5S RNA into the large ribosomal subunit, where it forms part of the central protuberance. This Halobacterium salinarum (strain ATCC 29341 / DSM 671 / R1) protein is Large ribosomal subunit protein uL18.